The sequence spans 177 residues: Large ribosomal subunit protein uL6 (177 aa).

It belongs to the universal ribosomal protein uL6 family. As to quaternary structure, part of the 50S ribosomal subunit.

In terms of biological role, this protein binds to the 23S rRNA, and is important in its secondary structure. It is located near the subunit interface in the base of the L7/L12 stalk, and near the tRNA binding site of the peptidyltransferase center. This Salmonella arizonae (strain ATCC BAA-731 / CDC346-86 / RSK2980) protein is Large ribosomal subunit protein uL6.